Reading from the N-terminus, the 316-residue chain is Olfactory receptor 8J1 (316 aa).

Over M1 to I25 the chain is Extracellular. Residue N5 is glycosylated (N-linked (GlcNAc...) asparagine). Residues P26–I46 form a helical membrane-spanning segment. Over T47–R54 the chain is Cytoplasmic. The helical transmembrane segment at L55 to T75 threads the bilayer. Over V76–T99 the chain is Extracellular. A disulfide bridge connects residues C97 and C189. A helical membrane pass occupies residues Q100–Y120. Residues D121–R139 are Cytoplasmic-facing. A helical transmembrane segment spans residues L140 to S160. Residues S161–T197 lie on the Extracellular side of the membrane. A helical membrane pass occupies residues V198–S217. Residues Y218 to A237 are Cytoplasmic-facing. The chain crosses the membrane as a helical span at residues F238 to M258. Residues Y259 to D272 lie on the Extracellular side of the membrane. A helical transmembrane segment spans residues K273–L293. The Cytoplasmic portion of the chain corresponds to R294–M316.

It belongs to the G-protein coupled receptor 1 family.

The protein resides in the cell membrane. Its function is as follows. Odorant receptor. The sequence is that of Olfactory receptor 8J1 (OR8J1) from Homo sapiens (Human).